The sequence spans 346 residues: Centromere protein L (346 aa).

Residue S41 is modified to Phosphoserine. At T45 the chain carries Phosphothreonine. S55 is subject to Phosphoserine.

It belongs to the CENP-L/IML3 family. Component of the CENPA-CAD complex, composed of CENPI, CENPK, CENPL, CENPO, CENPP, CENPQ, CENPR and CENPS. The CENPA-CAD complex interacts with the CENPA-NAC complex, at least composed of CENPA, CENPC, CENPH, CENPM, CENPN, CENPT and CENPU.

It localises to the nucleus. It is found in the chromosome. The protein resides in the centromere. Its function is as follows. Component of the CENPA-CAD (nucleosome distal) complex, a complex recruited to centromeres which is involved in assembly of kinetochore proteins, mitotic progression and chromosome segregation. May be involved in incorporation of newly synthesized CENPA into centromeres via its interaction with the CENPA-NAC complex. This chain is Centromere protein L (CENPL), found in Bos taurus (Bovine).